The sequence spans 358 residues: Alanine racemase (358 aa).

Lys-35 serves as the catalytic Proton acceptor; specific for D-alanine. The residue at position 35 (Lys-35) is an N6-(pyridoxal phosphate)lysine. Arg-131 is a substrate binding site. Residue Tyr-253 is the Proton acceptor; specific for L-alanine of the active site. Met-301 lines the substrate pocket.

Belongs to the alanine racemase family. It depends on pyridoxal 5'-phosphate as a cofactor.

The catalysed reaction is L-alanine = D-alanine. It participates in amino-acid biosynthesis; D-alanine biosynthesis; D-alanine from L-alanine: step 1/1. Functionally, catalyzes the interconversion of L-alanine and D-alanine. May also act on other amino acids. In Alteromonas mediterranea (strain DSM 17117 / CIP 110805 / LMG 28347 / Deep ecotype), this protein is Alanine racemase (alr).